The following is a 598-amino-acid chain: Transcription factor himD (598 aa).

The segment at residues 18–47 is a DNA-binding region (zn(2)-C6 fungal-type); it reads CQNCARAKIRCIRSVPTGSCDRCERLRKTC. A disordered region spans residues 87–110; that stretch reads TVSEASIDDKSPTTTPTTPRPPPD.

It is found in the nucleus. Its function is as follows. Transcription factor that, with himB, probably co-regulates the him gene cluster that mediates the biosynthesis of himeic acid A, a ubiquitin-activating enzyme (E1) inhibitor. In Aspergillus japonicus, this protein is Transcription factor himD.